A 268-amino-acid chain; its full sequence is Mediator of RNA polymerase II transcription subunit 18 (268 aa).

It belongs to the Mediator complex subunit 18 family. As to quaternary structure, component of the Mediator complex.

The protein localises to the nucleus. Functionally, component of the Mediator complex, a coactivator involved in the regulated transcription of nearly all RNA polymerase II-dependent genes. Mediator functions as a bridge to convey information from gene-specific regulatory proteins to the basal RNA polymerase II transcription machinery. Mediator is recruited to promoters by direct interactions with regulatory proteins and serves as a scaffold for the assembly of a functional preinitiation complex with RNA polymerase II and the general transcription factors. The sequence is that of Mediator of RNA polymerase II transcription subunit 18 (srb5) from Neosartorya fischeri (strain ATCC 1020 / DSM 3700 / CBS 544.65 / FGSC A1164 / JCM 1740 / NRRL 181 / WB 181) (Aspergillus fischerianus).